The following is a 456-amino-acid chain: MDSLRLISKSIKIEGTPFGSSHQRNQIFLKSVAFFLLIGLAYRFLITNSTVSPVPTVRSSPESLPPDPSGLTAITQTSASVDSPANITTIASQNVSTKCDIFIGNWVPDPSGPIYTNVSCRHIQDYQNCLKNGRPDVNYLRWRWQPRDCDLPRFNPEQFLDNMRNKWLAFIGDSISRNHVQSLLCILSQVEEVEDIFHDKEYKSRIWRFPSYNFTLSVIWSPFLVKAETFENGVPFSDIRVHLDKLDQKWTDQYINFDYVVISGGKWFLKTTIFHENNTVTGCHYCQGKNNMTELGYLYSYRKVLHLVLDFVAEPNHKAQVLFRTTTPDHFENGEWDSGGFCNRTMPFTEGSEGEMKSEDVSMRDIELEEFYKTTTTQQEGSNSNIVLLDTTSMSLLRPDGHPGPYRYPNPFAGLKNKELNQVQNDCLHWCLPGPIDSWNDLMVEVMLNRERQRRE.

The chain crosses the membrane as a helical; Signal-anchor for type II membrane protein span at residues Gln-26–Tyr-42. The GDS motif signature appears at Gly-172–Ser-174. A DCXHWCLPGXXDXWN motif motif is present at residues Asp-426 to Asn-440.

This sequence belongs to the PC-esterase family. TBL subfamily.

It is found in the membrane. Its function is as follows. May be involved in the O-acetylation of mannan. May act as a bridging protein that binds pectin and other cell wall polysaccharides. Probably involved in maintaining esterification of pectins. The polypeptide is Protein trichome birefringence-like 25 (TBL25) (Arabidopsis thaliana (Mouse-ear cress)).